Consider the following 111-residue polypeptide: MSWRGRSTYRPRPRRSLQPPELIGAMLEPTDEEPKEEKPPTKSRNPTPDQKREDDQGAAEIQVPDLEADLQELCQTKTGDGCEGGTDVKGKILPKAEHFKMPEAGEGKSQV.

Disordered regions lie at residues 1-61 (MSWR…AAEI) and 77-111 (KTGD…KSQV). Residues 86–111 (TDVKGKILPKAEHFKMPEAGEGKSQV) show a composition bias toward basic and acidic residues.

The protein belongs to the GAGE family.

This is X antigen family member 2 (XAGE2) from Homo sapiens (Human).